The primary structure comprises 150 residues: Lymphocyte antigen 6 complex locus protein G5c (150 aa).

Positions 1 to 41 (MRFMAGPAGSQSLGPLCFHSSPQALYTVLLIVLVMMSLVFG) are cleaved as a signal peptide. One can recognise a UPAR/Ly6 domain in the interval 60–150 (LRCYRCLLET…DPQNRGLYTP (91 aa)). 4 disulfide bridges follow: Cys-62–Cys-89, Cys-65–Cys-74, Cys-81–Cys-107, and Cys-134–Cys-139. Asn-96 carries N-linked (GlcNAc...) asparagine glycosylation.

In terms of assembly, forms oligomers. In terms of processing, N-glycosylated. Detected in T-cell lines and fetal and adult lung.

The protein localises to the secreted. May have a role in hematopoietic cell differentiation. The protein is Lymphocyte antigen 6 complex locus protein G5c (LY6G5C) of Homo sapiens (Human).